The following is a 129-amino-acid chain: Small ribosomal subunit protein uS11 (129 aa).

This sequence belongs to the universal ribosomal protein uS11 family. In terms of assembly, part of the 30S ribosomal subunit. Interacts with proteins S7 and S18. Binds to IF-3.

In terms of biological role, located on the platform of the 30S subunit, it bridges several disparate RNA helices of the 16S rRNA. Forms part of the Shine-Dalgarno cleft in the 70S ribosome. The chain is Small ribosomal subunit protein uS11 from Francisella tularensis subsp. mediasiatica (strain FSC147).